The primary structure comprises 349 residues: Thioredoxin reductase, mitochondrial (349 aa).

The N-terminal 30 residues, 1 to 30, are a transit peptide targeting the mitochondrion; sequence MLLVRNSTLGRLSSLRGFFRNINESNIFYR. FAD contacts are provided by residues 41 to 44, 70 to 71, Gln75, Asn84, Val117, Cys175, Asp318, and 325 to 327; these read SGPA, IA, and RQA. The cysteines at positions 172 and 175 are disulfide-linked.

This sequence belongs to the class-II pyridine nucleotide-disulfide oxidoreductase family. As to quaternary structure, homodimer. It depends on FAD as a cofactor.

It is found in the mitochondrion. It carries out the reaction [thioredoxin]-dithiol + NADP(+) = [thioredoxin]-disulfide + NADPH + H(+). The chain is Thioredoxin reductase, mitochondrial (TRR1) from Kluyveromyces lactis (strain ATCC 8585 / CBS 2359 / DSM 70799 / NBRC 1267 / NRRL Y-1140 / WM37) (Yeast).